The primary structure comprises 87 residues: Large ribosomal subunit protein bL31B (87 aa).

This sequence belongs to the bacterial ribosomal protein bL31 family. Type B subfamily. In terms of assembly, part of the 50S ribosomal subunit.

The protein is Large ribosomal subunit protein bL31B of Staphylococcus carnosus (strain TM300).